The chain runs to 143 residues: Small ribosomal subunit protein bS6 (143 aa).

A disordered region spans residues 96–143; sequence VTEASPMAAAKEERRDDRREVKKDVAAAPVEAKEDSVEEKSEEAASEE. A compositionally biased stretch (basic and acidic residues) spans 105–143; sequence AKEERRDDRREVKKDVAAAPVEAKEDSVEEKSEEAASEE.

Belongs to the bacterial ribosomal protein bS6 family.

In terms of biological role, binds together with bS18 to 16S ribosomal RNA. This chain is Small ribosomal subunit protein bS6, found in Colwellia psychrerythraea (strain 34H / ATCC BAA-681) (Vibrio psychroerythus).